Consider the following 1189-residue polypeptide: MPFGLKLRRTRRYNVLSKNCFVTRIRLLDSNVIECTLSVESTGQECLEAVAQRLELRETHYFGLWFLSKSQQARWVELEKPLKKHLDKFANEPLLFFGVMFYVPNVSRLQQEATRYQYYLQVKKDVLEGRLRCSLEQVIRLAGLAVQADFGDYNQFDSQEFLREYVLFPMDLAMEEAALEELTQKVAQEHKAHSGILPAEAELMYINEVERLDGFGQEIFPVKDSHGNSVHLGIFFMGIFVRNRVGRQAVIYRWNDIGSVTHSKAAILLELIDKEETALFHTDDIENAKYISRLFTTRHKFYKQNKICTEQSNSPPPIRRQPTWSRSSLPRQQPYILPPMHVQCSEHYSETHTSQDSIFPGNEEALYCRSHNSLDLNYLNGTVTNGSVCSVHSVNSLSCSQSFIQASPVSSNLSIPGSDIMRADYIPSHRHSTIIVPSYRPTPDYETVMRQMKRGLMHADSQSRSLRNLNIINTHAYNQPEELVYSQPEMRERHPYTVPYAHQGCYGHKLVSPSDQMNPQNCAMPIKPGASSISHTVSTPELANMQLQGAQHYSTAHMLKNYLFRPPPPYPRPRPATSTPDLASHRHKYVSGSSPDLVTRKVQLSVKTFQEDSSPVVHQSLQEVSEPLTATKHHGGGGGTVNKRHSLEVMNSMVRGMEAMTLKSLNIPMARRNTLREQGPSEETGGHEVHGLPQYHHKKTFSDATMLIHSSESEEEEETLEAAPQVPVLREKVEYSAQLQAALARIPNRPPPEYPGPRKSVSNGALRQDQGTPLPAMARCRVLRHGPSKALSVSRAEQLAVNGASLGPSISEPDLTSVKERVKKEPVKERPVSEMFSLEDSIIEREMMIRNLEKQKMTGPQAQKRPLMLAALNGLSVARVSGREDGHHDATRVPIDERLRALKKKLEDGMVFTEYEQIPNKKANGVFSTATLPENAERSRIREVVPYEENRVELIPTKENNTGYINASHIKVVVGGSEWHYIATQGPLPHTCHDFWQMVWEQGVNVIAMVTAEEEGGRTKSHRYWPKLGSKHSSATYGKFKVTTKFRTDSGCYATTGLKVKHLLSGQERTVWHLQYTDWPHHGCPEDVQGFLSYLEEIQSVRRHTNSVLEGIRTRHPPIVVHCSAGVGRTGVVILSELMIYCLEHNEKVEVPTMLRFLREQRMFMIQTIAQYKFVYQVLVQFLQNSRLI.

The FERM domain occupies 21-306 (FVTRIRLLDS…TRHKFYKQNK (286 aa)). 7 positions are modified to phosphoserine: S314, S461, S486, S591, S593, S594, and S646. The interval 744–775 (ARIPNRPPPEYPGPRKSVSNGALRQDQGTPLP) is disordered. Polar residues predominate over residues 760–771 (SVSNGALRQDQG). At S833 the chain carries Phosphoserine. The Tyrosine-protein phosphatase domain occupies 911 to 1182 (VFTEYEQIPN…KFVYQVLVQF (272 aa)). Residue C1123 is the Phosphocysteine intermediate of the active site. Substrate is bound by residues 1123–1129 (CSAGVGR) and Q1167.

Belongs to the protein-tyrosine phosphatase family. Non-receptor class subfamily. Interacts with FLT4; the interaction is enhanced by stimulation with VEGFC. Interacts (via PPxY motifs) with YAP1 (via WW domains); this interaction leads to the cytoplasmic sequestration of YAP1 and inhibits its transcriptional coactivator activity. Post-translationally, ubiquitinated by the ECS (Elongin BC-CUL2/5-SOCS-box protein)/LRR1 E3 ligase complex and subsequently targeted to proteasomal degradation. Thymus; in cells of both hematopoietic and non-hematopoietic origins.

It localises to the cytoplasm. The protein localises to the cytoskeleton. The protein resides in the nucleus. The enzyme catalyses O-phospho-L-tyrosyl-[protein] + H2O = L-tyrosyl-[protein] + phosphate. In terms of biological role, protein tyrosine phosphatase which may play a role in the regulation of lymphangiogenesis, cell-cell adhesion, cell-matrix adhesion, cell migration, cell growth and also regulates TGF-beta gene expression, thereby modulating epithelial-mesenchymal transition. Mediates beta-catenin dephosphorylation at adhesion junctions. Acts as a negative regulator of the oncogenic property of YAP, a downstream target of the hippo pathway, in a cell density-dependent manner. May function as a tumor suppressor. This is Tyrosine-protein phosphatase non-receptor type 14 (Ptpn14) from Mus musculus (Mouse).